A 125-amino-acid chain; its full sequence is Ribosome-binding factor A (125 aa).

This sequence belongs to the RbfA family. As to quaternary structure, monomer. Binds 30S ribosomal subunits, but not 50S ribosomal subunits or 70S ribosomes.

It is found in the cytoplasm. Its function is as follows. One of several proteins that assist in the late maturation steps of the functional core of the 30S ribosomal subunit. Associates with free 30S ribosomal subunits (but not with 30S subunits that are part of 70S ribosomes or polysomes). Required for efficient processing of 16S rRNA. May interact with the 5'-terminal helix region of 16S rRNA. This Kosmotoga olearia (strain ATCC BAA-1733 / DSM 21960 / TBF 19.5.1) protein is Ribosome-binding factor A.